A 55-amino-acid chain; its full sequence is Large ribosomal subunit protein bL33 (55 aa).

Belongs to the bacterial ribosomal protein bL33 family.

The chain is Large ribosomal subunit protein bL33 from Enterobacter sp. (strain 638).